The chain runs to 115 residues: UPF0102 protein NMA0341 (115 aa).

Belongs to the UPF0102 family.

In Neisseria meningitidis serogroup A / serotype 4A (strain DSM 15465 / Z2491), this protein is UPF0102 protein NMA0341.